The following is a 1408-amino-acid chain: Palladin (1408 aa).

The disordered stretch occupies residues 69–229 (SKSPISLCET…SASQSPTADQ (161 aa)). Polar residues-rich tracts occupy residues 149-169 (PNPSSKPKTAQQSKAGPQSQL) and 193-229 (RSPNGESSSPDSGYLSPKNQPSALMSASASQSPTADQ). Ser194 is subject to Phosphoserine. Ig-like C2-type domains lie at 278–367 (PRFI…AEVF) and 448–546 (PVFT…LVIT). Intrachain disulfides connect Cys299–Cys351 and Cys469–Cys528. The segment at 569 to 573 (FPPPP) is interaction with VASP. Disordered regions lie at residues 631–660 (NGKAYGNKSPPTPTALLSPTKEPPPLLAKP) and 687–727 (PPGV…VPSE). The residue at position 639 (Ser639) is a Phosphoserine. Phosphothreonine is present on Thr642. The residue at position 648 (Ser648) is a Phosphoserine. Residues 653–683 (PPPLLAKPKLDPLKLQQLQNQVRLEQEACAW) are interaction with LASP1. Residues 683–713 (WPPAPPGVPCNSSSSGSSAPPSPPFPPPPPA) form an interaction with SORBS2, SPIN90 and SRC region. Residues 691–701 (PCNSSSSGSSA) are compositionally biased toward low complexity. Residues Ser700, Ser704, and Ser744 each carry the phosphoserine modification. Over residues 702–714 (PPSPPFPPPPPAF) the composition is skewed to pro residues. 3 disordered regions span residues 758 to 854 (NLGP…RFGP), 882 to 904 (KGVTPAGFPKKSSRTARIASDEE), and 960 to 981 (ETAANQDAGAPRASVGGPLDGQ). The span at 765 to 779 (LPTPTSSPSSSSLPS) shows a compositional bias: low complexity. Composition is skewed to pro residues over residues 780 to 797 (PLSPTPRPFGRAPGPPFV), 807 to 818 (SPSPPPPPPPVF), and 828 to 840 (DVFPLPPPPPPLP). The interaction with EPS8 stretch occupies residues 782 to 842 (SPTPRPFGRA…PPPPPPLPSS (61 aa)). Residues 807 to 842 (SPSPPPPPPPVFSPSAAYPVPDVFPLPPPPPPLPSS) form an interaction with SORBS2, SPIN90, SRC and PFN1 region. Residues 830–834 (FPLPP) form an interaction with VASP region. Residue Ser901 is modified to Phosphoserine. 2 positions are modified to phosphoserine: Ser1004 and Ser1009. The Ig-like C2-type 3 domain occupies 1026-1110 (PFFEMKLKHY…MAANPQGRVS (85 aa)). Residues 1121 to 1150 (NQRGRSPRSPSGHPHARRPRSRSRDSGDEN) are disordered. Residues 1123–1133 (RGRSPRSPSGH) show a composition bias toward low complexity. 4 positions are modified to phosphoserine: Ser1126, Ser1129, Ser1131, and Ser1141. Ser1143 carries the phosphoserine; by PKB/AKT1 modification. A Phosphoserine modification is found at Ser1146. Ig-like C2-type domains are found at residues 1160-1251 (PHFL…LVVA) and 1259-1349 (PVFM…ARLD). 2 interaction with EZR regions span residues 1162 to 1251 (FLQA…LVVA) and 1261 to 1351 (FMEK…LDVY). Cys1181 and Cys1233 form a disulfide bridge. Ser1377 carries the post-translational modification Phosphoserine.

This sequence belongs to the myotilin/palladin family. As to quaternary structure, interacts with EPS8. Interacts with LASP1. Interacts with VASP. Interacts with ACTN. Interacts with SORBS2. Interacts with PFN1. Interacts with LPP. Interacts with SPIN90. Interacts with SRC. Interacts with EZR. Interacts with RAI14. Post-translationally, phosphorylated predominantly on serines and, to a lesser extent, on tyrosines. Phosphorylation at Ser-1143 by PKB/AKT1 modulates cytoskeletal organization and cell motility. Detected in both muscle and non-muscle tissues and cells (at protein level). Isoform 3 is widely expressed, isoform 4 is particularly abundant in tissues rich in smooth muscle and in the cardiac muscle and isoform 1 is detected in heart.

Its subcellular location is the cytoplasm. It is found in the cytoskeleton. It localises to the cell junction. The protein resides in the focal adhesion. The protein localises to the myofibril. Its subcellular location is the sarcomere. It is found in the z line. It localises to the cell projection. The protein resides in the ruffle. The protein localises to the podosome. Its subcellular location is the lamellipodium. It is found in the axon. It localises to the growth cone. In terms of biological role, cytoskeletal protein required for organization of normal actin cytoskeleton. Roles in establishing cell morphology, motility, cell adhesion and cell-extracellular matrix interactions in a variety of cell types. May function as a scaffolding molecule with the potential to influence both actin polymerization and the assembly of existing actin filaments into higher-order arrays. Binds to proteins that bind to either monomeric or filamentous actin. Localizes at sites where active actin remodeling takes place, such as lamellipodia and membrane ruffles. Different isoforms may have functional differences. Involved in the control of morphological and cytoskeletal changes associated with dendritic cell maturation. Involved in targeting ACTN to specific subcellular locations. May be required for the initiation of neural tube closure. The polypeptide is Palladin (Palld) (Mus musculus (Mouse)).